A 190-amino-acid polypeptide reads, in one-letter code: Lipid A acyltransferase PagP (190 aa).

A signal peptide spans 1-18; it reads MKRLISCLTIICALNASA. Active-site residues include His-60, Asp-103, and Ser-104.

The protein belongs to the lipid A palmitoyltransferase family. Homodimer.

The protein resides in the cell outer membrane. It carries out the reaction a lipid A + a 1,2-diacyl-sn-glycero-3-phosphocholine = a hepta-acyl lipid A + a 2-acyl-sn-glycero-3-phosphocholine. The enzyme catalyses a lipid IVA + a 1,2-diacyl-sn-glycero-3-phosphocholine = a lipid IVB + a 2-acyl-sn-glycero-3-phosphocholine. The catalysed reaction is a lipid IIA + a 1,2-diacyl-sn-glycero-3-phosphocholine = a lipid IIB + a 2-acyl-sn-glycero-3-phosphocholine. Transfers a fatty acid residue from the sn-1 position of a phospholipid to the N-linked hydroxyfatty acid chain on the proximal unit of lipid A or its precursors. The polypeptide is Lipid A acyltransferase PagP (Legionella pneumophila (strain Paris)).